Here is a 149-residue protein sequence, read N- to C-terminus: Calmodulin (149 aa).

An N-acetylalanine modification is found at A2. 4 consecutive EF-hand domains span residues 8–43 (EQIA…LGQN), 44–79 (PTEA…KMKD), 81–116 (DSEE…LGEK), and 117–149 (LSED…MMSK). Ca(2+)-binding residues include D21, D23, D25, T27, E32, D57, D59, N61, T63, E68, D94, D96, N98, Y100, E105, D130, D132, D134, Q136, and E141.

The protein belongs to the calmodulin family.

In terms of biological role, calmodulin mediates the control of a large number of enzymes, ion channels and other proteins by Ca(2+). Among the enzymes to be stimulated by the calmodulin-Ca(2+) complex are a number of protein kinases and phosphatases. In Blastocladiella emersonii (Aquatic fungus), this protein is Calmodulin (CMD1).